A 105-amino-acid chain; its full sequence is UPF0251 protein AF_0666 (105 aa).

Belongs to the UPF0251 family.

The protein is UPF0251 protein AF_0666 of Archaeoglobus fulgidus (strain ATCC 49558 / DSM 4304 / JCM 9628 / NBRC 100126 / VC-16).